Reading from the N-terminus, the 187-residue chain is Accessory gene regulator protein B (187 aa).

Helical transmembrane passes span 49–69 (LAYILNIFIFTLITNISFYLI), 82–102 (FWCYIESITLFIVLPLLVLHF), 107–127 (TLMMFLALLSVGVVIKYAPAA), 143–163 (YFSIIISTILFIITLFVKEPY), and 164–184 (TQFIQLGIIIQAITLLPIYYS).

It belongs to the AgrB family.

It is found in the cell membrane. Its function is as follows. Essential for the production of a quorum sensing system signal molecule, the autoinducing peptide (AIP). This quorum sensing system is responsible for the regulation of the expression of virulence factor genes. Involved in the proteolytic processing of AgrD, the precursor of AIP. The polypeptide is Accessory gene regulator protein B (Staphylococcus aureus (strain MRSA252)).